Reading from the N-terminus, the 248-residue chain is Probable transcriptional regulatory protein PSPPH_3775 (248 aa).

It belongs to the TACO1 family.

The protein resides in the cytoplasm. In Pseudomonas savastanoi pv. phaseolicola (strain 1448A / Race 6) (Pseudomonas syringae pv. phaseolicola (strain 1448A / Race 6)), this protein is Probable transcriptional regulatory protein PSPPH_3775.